We begin with the raw amino-acid sequence, 284 residues long: Bifunctional protein FolD (284 aa).

NADP(+) contacts are provided by residues 165 to 167 (GRS), S190, and V231.

This sequence belongs to the tetrahydrofolate dehydrogenase/cyclohydrolase family. As to quaternary structure, homodimer.

The enzyme catalyses (6R)-5,10-methylene-5,6,7,8-tetrahydrofolate + NADP(+) = (6R)-5,10-methenyltetrahydrofolate + NADPH. It catalyses the reaction (6R)-5,10-methenyltetrahydrofolate + H2O = (6R)-10-formyltetrahydrofolate + H(+). It functions in the pathway one-carbon metabolism; tetrahydrofolate interconversion. Functionally, catalyzes the oxidation of 5,10-methylenetetrahydrofolate to 5,10-methenyltetrahydrofolate and then the hydrolysis of 5,10-methenyltetrahydrofolate to 10-formyltetrahydrofolate. The chain is Bifunctional protein FolD from Brevibacillus brevis (strain 47 / JCM 6285 / NBRC 100599).